Here is a 501-residue protein sequence, read N- to C-terminus: Putative antiporter subunit mnhD2 (501 aa).

The next 14 membrane-spanning stretches (helical) occupy residues 4–24, 33–53, 79–99, 109–129, 131–151, 162–182, 207–227, 245–265, 274–294, 309–329, 334–354, 369–389, 409–429, and 452–472; these read SNLL…LVFI, IFSI…LIYV, LSLL…AYGF, YYLP…FLTA, LFNI…LITL, IIYV…VGLL, IVIV…LVLF, FAAL…TLIF, PLLV…VLAY, IGFI…GAIF, DIVV…ITGL, FFGV…PFSG, LALM…IFFV, and NLIG…PLLF.

The protein belongs to the CPA3 antiporters (TC 2.A.63) subunit D family. In terms of assembly, may form a heterooligomeric complex that consists of seven subunits: mnhA2, mnhB2, mnhC2, mnhD2, mnhE2, mnhF2 and mnhG2.

The protein localises to the cell membrane. This Staphylococcus saprophyticus subsp. saprophyticus (strain ATCC 15305 / DSM 20229 / NCIMB 8711 / NCTC 7292 / S-41) protein is Putative antiporter subunit mnhD2 (mnhD2).